A 428-amino-acid polypeptide reads, in one-letter code: Spliceosome RNA helicase DDX39B (428 aa).

Over residues 1–19 (MAENDVDNELLDYEEDEVE) the composition is skewed to acidic residues. Residues 1 to 32 (MAENDVDNELLDYEEDEVETAAGGDGSEAPAK) are disordered. At alanine 2 the chain carries N-acetylalanine. Residue lysine 36 is modified to N6-acetyllysine; alternate. Residue lysine 36 forms a Glycyl lysine isopeptide (Lys-Gly) (interchain with G-Cter in SUMO2); alternate linkage. Phosphoserine occurs at positions 38 and 41. Positions 45–73 (SGFRDFLLKPELLRAIVDCGFEHPSEVQH) match the Q motif motif. In terms of domain architecture, Helicase ATP-binding spans 76–249 (IPQAILGMDV…RKFMQDPMEI (174 aa)). 89-96 (AKSGMGKT) is an ATP binding site. Threonine 172 carries the post-translational modification Phosphothreonine. The short motif at 196–199 (DECD) is the DECD box element. A Helicase C-terminal domain is found at 261 to 422 (GLQQYYVKLK…ELPDEIDISS (162 aa)).

The protein belongs to the DEAD box helicase family. DECD subfamily. As to quaternary structure, homodimer, and heterodimer with DDX39A. DDX39B interacts with the THO subcomplex to form the THO-DDX39B complex which multimerizes into a 28-subunit tetrameric assembly. Component of the transcription/export (TREX) complex at least composed of ALYREF/THOC4, DDX39B, SARNP/CIP29, CHTOP and the THO subcomplex; in the complex interacts with THOC2. THOC1-THOC2-THOC3-DDX39B subcomplex is sufficient for the interaction with export factor NXF1-NXT1. TREX seems to have a dynamic structure involving ATP-dependent remodeling. Within the TREX complex bridges ALYREF/THOC4 and the THO subcomplex, and, in a ATP-dependent manner, ALYREF/THOC4 and SARNP/CIP29. Component of the spliceosome. Interacts directly with U2AF2. Interacts with RBM8A, RNPS1 and SRRM1, FYTTD1/UIF, THOC1, MX1 and POLDIP3. Interacts with LUZP4. Interacts with SARNP/CIP29 (via the C-terminal domain); the interaction is direct and facilitates RNA binding of DDX39B.

It is found in the nucleus. The protein localises to the nucleus speckle. The protein resides in the cytoplasm. It carries out the reaction ATP + H2O = ADP + phosphate + H(+). Its function is as follows. Involved in nuclear export of spliced and unspliced mRNA. Component of the TREX complex which is thought to couple mRNA transcription, processing and nuclear export, and specifically associates with spliced mRNA and not with unspliced pre-mRNA. The TREX complex is recruited to spliced mRNAs by a transcription-independent mechanism, binds to mRNA upstream of the exon-junction complex (EJC) and is recruited in a splicing- and cap-dependent manner to a region near the 5' end of the mRNA where it functions in mRNA export to the cytoplasm via the TAP/NXF1 pathway. The THOC1-THOC2-THOC3 core complex alone is sufficient to promote ATPase activity of DDX39B; in the complex THOC2 is the only component that directly interacts with DDX39B. Associates with SARNP/CIP29, which facilitates RNA binding of DDX39B and likely plays a role in mRNA export. May undergo several rounds of ATP hydrolysis during assembly of TREX to drive subsequent loading of components such as ALYREF/THOC4 and CHTOP onto mRNA. Also associates with pre-mRNA independent of ALYREF/THOC4. Involved in the nuclear export of intronless mRNA; the ATP-bound form is proposed to recruit export adapter ALYREF/THOC4 to intronless mRNA; its ATPase activity is cooperatively stimulated by RNA and ALYREF/THOC4 and ATP hydrolysis is thought to trigger the dissociation from RNA to allow the association of ALYREF/THOC4 and the NXF1-NXT1 heterodimer. Involved in transcription elongation and genome stability. Functionally, splice factor that is required for the first ATP-dependent step in spliceosome assembly and for the interaction of U2 snRNP with the branchpoint. Has both RNA-stimulated ATP binding/hydrolysis activity and ATP-dependent RNA unwinding activity. Even with the stimulation of RNA, the ATPase activity is weak. Can only hydrolyze ATP but not other NTPs. The RNA stimulation of ATPase activity does not have a strong preference for the sequence and length of the RNA. However, ssRNA stimulates the ATPase activity much more strongly than dsRNA. Can unwind 5' or 3' overhangs or blunt end RNA duplexes in vitro. The ATPase and helicase activities are not influenced by U2AF2; the effect of ALYREF/THOC4 is reported conflictingly. The polypeptide is Spliceosome RNA helicase DDX39B (DDX39B) (Canis lupus familiaris (Dog)).